The primary structure comprises 132 residues: UPF0292 protein PYRAB04740 (132 aa).

Residues 20-100 (DGAIIVEGPR…KVDTETRRSL (81 aa)) form the Toprim domain. Mg(2+)-binding residues include E26, D69, and D71.

Belongs to the UPF0292 family. Mg(2+) serves as cofactor.

This chain is UPF0292 protein PYRAB04740, found in Pyrococcus abyssi (strain GE5 / Orsay).